Reading from the N-terminus, the 124-residue chain is Small ribosomal subunit protein uS12 (124 aa).

Disordered stretches follow at residues 9-32 and 105-124; these read RKGR…QRRG and QGVK…KEKS. The span at 108–118 shows a compositional bias: basic residues; it reads KNRKQARSRYG.

It belongs to the universal ribosomal protein uS12 family. In terms of assembly, part of the 30S ribosomal subunit. Contacts proteins S8 and S17. May interact with IF1 in the 30S initiation complex.

In terms of biological role, with S4 and S5 plays an important role in translational accuracy. Interacts with and stabilizes bases of the 16S rRNA that are involved in tRNA selection in the A site and with the mRNA backbone. Located at the interface of the 30S and 50S subunits, it traverses the body of the 30S subunit contacting proteins on the other side and probably holding the rRNA structure together. The combined cluster of proteins S8, S12 and S17 appears to hold together the shoulder and platform of the 30S subunit. The chain is Small ribosomal subunit protein uS12 from Nocardia farcinica (strain IFM 10152).